A 144-amino-acid polypeptide reads, in one-letter code: Transcription antitermination protein NusB (144 aa).

The protein belongs to the NusB family.

Its function is as follows. Involved in transcription antitermination. Required for transcription of ribosomal RNA (rRNA) genes. Binds specifically to the boxA antiterminator sequence of the ribosomal RNA (rrn) operons. The chain is Transcription antitermination protein NusB from Buchnera aphidicola subsp. Baizongia pistaciae (strain Bp).